We begin with the raw amino-acid sequence, 146 residues long: MPTQSKHASINIGLIQAREALMTQFRPILNQANITDQQWRIIRLLAENGTLDFQDLANQACILRPSLTGILTRLEKAGLVVRLKPSNDQRRVYLKLTSEGEKLYEEIGEEVDERYDAIEEVLGREKMLLLKDLLAELAKIEDALNS.

Residues 7–139 enclose the HTH marR-type domain; that stretch reads HASINIGLIQ…LKDLLAELAK (133 aa). Positions 53-76 form a DNA-binding region, H-T-H motif; that stretch reads FQDLANQACILRPSLTGILTRLEK.

Its activity is regulated as follows. Repressor activity requires the presence of the Integration Host Factor (IHF), which binds to sequences located between FarR binding sites A and C. IHF binding to the promoter region stabilizes the binding of FarR to its binding sites A and C and as a consequence, enhances repression of the farAB operon. Functionally, negatively controls expression of the farAB operon by binding directly to the farAB promoter region. Binds to three sites (sites A, B and C) within the DNA sequence upstream of farA. Also represses its own expression. In Neisseria gonorrhoeae, this protein is HTH-type transcriptional regulator FarR.